We begin with the raw amino-acid sequence, 129 residues long: Follitropin subunit beta (129 aa).

Positions 1 to 18 are cleaved as a signal peptide; sequence MKSVQFCFLFCCWRATCC. 6 disulfides stabilise this stretch: cysteine 21/cysteine 69, cysteine 35/cysteine 84, cysteine 38/cysteine 122, cysteine 46/cysteine 100, cysteine 50/cysteine 102, and cysteine 105/cysteine 112. Asparagine 25 and asparagine 42 each carry an N-linked (GlcNAc...) asparagine glycan.

The protein belongs to the glycoprotein hormones subunit beta family. In terms of assembly, heterodimer. The active follitropin is a heterodimer composed of an alpha chain/CGA shared with other hormones and a unique beta chain/FSHB shown here.

It is found in the secreted. Its function is as follows. Together with the alpha chain CGA constitutes follitropin, the follicle-stimulating hormone, and provides its biological specificity to the hormone heterodimer. Binds FSHR, a G protein-coupled receptor, on target cells to activate downstream signaling pathways. Follitropin is involved in follicle development and spermatogenesis in reproductive organs. The polypeptide is Follitropin subunit beta (FSHB) (Cervus nippon (Sika deer)).